A 207-amino-acid chain; its full sequence is Interferon kappa (207 aa).

An N-terminal signal peptide occupies residues 1–27 (MSTKPDMIQKCLWLEILMGIFIAGTLS). Disulfide bonds link C30/C128 and C59/C181. A coiled-coil region spans residues 118 to 148 (LDQQAEYLNQCLEEDKNENEDMKEMKENEMK).

It belongs to the alpha/beta interferon family. As to expression, expressed in keratinocytes, monocytes and in resting dendritic cells.

The protein resides in the secreted. In terms of biological role, may play a role in the regulation of immune cell function. Cytokine that imparts cellular protection against viral infection in a species-specific manner. Activates the interferon-stimulated response element signaling pathway. It is able to directly modulate cytokine release from monocytes and dendritic cells. Binds heparin. The protein is Interferon kappa (IFNK) of Homo sapiens (Human).